A 733-amino-acid chain; its full sequence is Neutral ceramidase 3 (733 aa).

A signal peptide spans 1-25 (MTRWSMSMHCTLFLLFLLRLTCIFS). The Nucleophile role is filled by serine 307. Asparagine 325 carries N-linked (GlcNAc...) asparagine glycosylation.

The protein belongs to the neutral ceramidase family.

It is found in the secreted. Its subcellular location is the endoplasmic reticulum. It localises to the golgi apparatus. It catalyses the reaction an N-acylsphing-4-enine + H2O = sphing-4-enine + a fatty acid. Its function is as follows. Hydrolyzes the sphingolipid ceramide into sphingosine and free fatty acid. Promotes oxidative stress resistance. This Arabidopsis thaliana (Mouse-ear cress) protein is Neutral ceramidase 3.